Consider the following 256-residue polypeptide: Floral homeotic protein APETALA 1 (256 aa).

The 61-residue stretch at 1–61 (MGRGRVQLKR…GKLFEYSTDP (61 aa)) folds into the MADS-box domain. The 91-residue stretch at 88–178 (NTNWSMEYNR…SKQIKERENV (91 aa)) folds into the K-box domain. Residues 187–206 (DEQNHGHNMPPPPPPQQHQI) are disordered.

As to quaternary structure, homodimer capable of binding to CArG-box sequences.

It is found in the nucleus. Its function is as follows. Transcription factor that promotes early floral meristem identity in synergy with LEAFY. Displays a redundant function with CAULIFLOWER in the up-regulation of LEAFY. Required subsequently for the transition of an inflorescence meristem into a floral meristem, and for the normal development of sepals and petals in flowers. Regulates positively B class homeotic proteins. The chain is Floral homeotic protein APETALA 1 (AP1) from Brassica oleracea (Wild cabbage).